The chain runs to 197 residues: 7-methyl-GTP pyrophosphatase (197 aa).

The active-site Proton acceptor is the D69.

This sequence belongs to the Maf family. YceF subfamily. A divalent metal cation serves as cofactor.

The protein resides in the cytoplasm. It carries out the reaction N(7)-methyl-GTP + H2O = N(7)-methyl-GMP + diphosphate + H(+). Nucleoside triphosphate pyrophosphatase that hydrolyzes 7-methyl-GTP (m(7)GTP). May have a dual role in cell division arrest and in preventing the incorporation of modified nucleotides into cellular nucleic acids. The chain is 7-methyl-GTP pyrophosphatase from Syntrophotalea carbinolica (strain DSM 2380 / NBRC 103641 / GraBd1) (Pelobacter carbinolicus).